The following is a 207-amino-acid chain: Large ribosomal subunit protein uL4 (207 aa).

The segment at 49–78 is disordered; it reads HAVKNRSAVSGGGRKPWRQKGTGRARQGSI.

It belongs to the universal ribosomal protein uL4 family. As to quaternary structure, part of the 50S ribosomal subunit.

Its function is as follows. One of the primary rRNA binding proteins, this protein initially binds near the 5'-end of the 23S rRNA. It is important during the early stages of 50S assembly. It makes multiple contacts with different domains of the 23S rRNA in the assembled 50S subunit and ribosome. Forms part of the polypeptide exit tunnel. This chain is Large ribosomal subunit protein uL4, found in Streptococcus equi subsp. zooepidemicus (strain MGCS10565).